A 323-amino-acid chain; its full sequence is Acetyl-coenzyme A carboxylase carboxyl transferase subunit alpha (323 aa).

The region spanning 39 to 293 is the CoA carboxyltransferase C-terminal domain; it reads RLSKKSQQLT…RRALADSLRQ (255 aa).

This sequence belongs to the AccA family. In terms of assembly, acetyl-CoA carboxylase is a heterohexamer composed of biotin carboxyl carrier protein (AccB), biotin carboxylase (AccC) and two subunits each of ACCase subunit alpha (AccA) and ACCase subunit beta (AccD).

The protein resides in the cytoplasm. The catalysed reaction is N(6)-carboxybiotinyl-L-lysyl-[protein] + acetyl-CoA = N(6)-biotinyl-L-lysyl-[protein] + malonyl-CoA. The protein operates within lipid metabolism; malonyl-CoA biosynthesis; malonyl-CoA from acetyl-CoA: step 1/1. Its function is as follows. Component of the acetyl coenzyme A carboxylase (ACC) complex. First, biotin carboxylase catalyzes the carboxylation of biotin on its carrier protein (BCCP) and then the CO(2) group is transferred by the carboxyltransferase to acetyl-CoA to form malonyl-CoA. The sequence is that of Acetyl-coenzyme A carboxylase carboxyl transferase subunit alpha from Burkholderia multivorans (strain ATCC 17616 / 249).